A 336-amino-acid chain; its full sequence is Adenylate isopentenyltransferase 3, chloroplastic (336 aa).

Residues 1–55 (MIMKISMAMCKQPLPPSPTLDFPPARFGPNMLTLNPYGPKDKVVVIMGATGTGKS) constitute a chloroplast transit peptide. Residue 48–55 (GATGTGKS) coordinates ATP. Residue C333 is modified to Cysteine methyl ester. A lipid anchor (S-farnesyl cysteine) is attached at C333. A propeptide spans 334–336 (LVA) (removed in mature form).

It belongs to the IPP transferase family. Post-translationally, farnesylated. In terms of tissue distribution, expressed the phloem companion cells.

The protein resides in the plastid. Its subcellular location is the chloroplast. The protein localises to the nucleus membrane. It localises to the cytoplasm. The catalysed reaction is dimethylallyl diphosphate + ADP = N(6)-(dimethylallyl)adenosine 5'-diphosphate + diphosphate. It catalyses the reaction dimethylallyl diphosphate + ATP = N(6)-(dimethylallyl)adenosine 5'-triphosphate + diphosphate. Involved in cytokinin biosynthesis. Catalyzes the transfer of an isopentenyl group from dimethylallyl diphosphate (DMAPP) to ATP and ADP. The chain is Adenylate isopentenyltransferase 3, chloroplastic (IPT3) from Arabidopsis thaliana (Mouse-ear cress).